We begin with the raw amino-acid sequence, 84 residues long: Exodeoxyribonuclease 7 small subunit (84 aa).

The protein belongs to the XseB family. In terms of assembly, heterooligomer composed of large and small subunits.

It is found in the cytoplasm. It carries out the reaction Exonucleolytic cleavage in either 5'- to 3'- or 3'- to 5'-direction to yield nucleoside 5'-phosphates.. Functionally, bidirectionally degrades single-stranded DNA into large acid-insoluble oligonucleotides, which are then degraded further into small acid-soluble oligonucleotides. The chain is Exodeoxyribonuclease 7 small subunit from Bartonella henselae (strain ATCC 49882 / DSM 28221 / CCUG 30454 / Houston 1) (Rochalimaea henselae).